A 286-amino-acid chain; its full sequence is Protein PXR1 (286 aa).

A disordered region spans residues M1–S20. Residues K25–A71 form the G-patch domain. The disordered stretch occupies residues E148–V255. The span at P168–E198 shows a compositional bias: basic and acidic residues. A compositionally biased stretch (basic residues) spans K199–K230.

It belongs to the PINX1 family.

The protein resides in the nucleus. The protein localises to the nucleolus. Involved in rRNA-processing at A0, A1 and A2 sites and negatively regulates telomerase. In Meyerozyma guilliermondii (strain ATCC 6260 / CBS 566 / DSM 6381 / JCM 1539 / NBRC 10279 / NRRL Y-324) (Yeast), this protein is Protein PXR1 (PXR1).